Here is a 151-residue protein sequence, read N- to C-terminus: Transcriptional regulator SyrB (151 aa).

The disordered stretch occupies residues 1–61; that stretch reads MADESNTGPV…RYSEQERNDK (61 aa). Over residues 33–48 the composition is skewed to low complexity; it reads PQKAAAEPAQPKAPAA. The span at 52-61 shows a compositional bias: basic and acidic residues; it reads RYSEQERNDK.

The protein belongs to the SyrB family.

Its function is as follows. Responsible for the repression of SyrM activity. This chain is Transcriptional regulator SyrB (syrB), found in Rhizobium meliloti (strain 1021) (Ensifer meliloti).